A 925-amino-acid polypeptide reads, in one-letter code: Ectonucleotide pyrophosphatase/phosphodiesterase family member 1 (925 aa).

A compositionally biased stretch (gly residues) spans 1–17 (MERDGCAGGGSRGGEGG). A disordered region spans residues 1–43 (MERDGCAGGGSRGGEGGRAPREGPAGNGRDRGRSHAAEAPGDP). Topologically, residues 1–76 (MERDGCAGGG…RTAKDPNTYK (76 aa)) are cytoplasmic. Positions 45–52 (AAASLLAP) match the Di-leucine motif motif. The chain crosses the membrane as a helical; Signal-anchor for type II membrane protein span at residues 77 to 97 (VLSLVLSVCVLTTILGCIFGL). The Extracellular portion of the chain corresponds to 98-925 (KPSCAKEVKS…THLPTFSQED (828 aa)). SMB domains are found at residues 104 to 144 (EVKS…IEPE) and 145 to 189 (HIWT…GEKS). 10 disulfides stabilise this stretch: C108-C122, C112-C140, C120-C133, C126-C132, C149-C166, C154-C184, C164-C177, C170-C176, C195-C241, and C203-C415. N179 carries an N-linked (GlcNAc...) asparagine glycan. The interval 191 to 591 (VEEPCESINE…APNNGTHGSL (401 aa)) is phosphodiesterase. Residues D218, T256, and N277 each contribute to the AMP site. Zn(2+) contacts are provided by D218 and T256. T256 serves as the catalytic AMP-threonine intermediate. CMP-binding residues include T256 and N277. Positions 256 and 277 each coordinate dTMP. Positions 256 and 277 each coordinate GMP. T256 carries the phosphothreonine modification. N285 is a glycosylation site (N-linked (GlcNAc...) asparagine). Residues L290, K295, and Y340 each contribute to the GMP site. Residues K295 and Y340 each coordinate AMP. The CMP site is built by K295 and Y340. Y340 contributes to the dTMP binding site. N341 carries an N-linked (GlcNAc...) asparagine glycan. Residue D376 participates in AMP binding. Zn(2+) is bound by residues D376, H380, D423, and H424. Position 376 (D376) interacts with CMP. Position 376 (D376) interacts with dTMP. D376 provides a ligand contact to GMP. Residue H380 participates in 2',3'-cGAMP binding. Residue H424 participates in AMP binding. H424 contributes to the CMP binding site. Residue H424 participates in dTMP binding. A GMP-binding site is contributed by H424. Intrachain disulfides connect C431–C530, C480–C868, C614–C672, C626–C726, C628–C711, and C838–C848. N477 is a glycosylation site (N-linked (GlcNAc...) asparagine). S532 contacts 2',3'-cGAMP. Residue H535 participates in AMP binding. Position 535 (H535) interacts with Zn(2+). Residue H535 participates in CMP binding. Position 535 (H535) interacts with dTMP. H535 contacts GMP. N-linked (GlcNAc...) asparagine glycans are attached at residues N585, N643, N700, N731, and N748. Residues 597 to 647 (NPVYTPKHPKEVHPLVQCPFTRNPRDNLGCSCNPSILPIEDFQTQFNLTVA) are linker. The nuclease-like domain stretch occupies residues 654-925 (HETLPYGRPR…THLPTFSQED (272 aa)). Ca(2+)-binding residues include D800, D802, D804, R806, and D808.

Belongs to the nucleotide pyrophosphatase/phosphodiesterase family. In terms of assembly, homodimer. Interacts with INSR; leading to inhibit INSR autophosphorylation and subsequent activation of INSR kinase activity. Monomeric. The cofactor is Zn(2+). In terms of processing, autophosphorylated as part of the catalytic cycle of phosphodiesterase/pyrophosphatase activity. Post-translationally, N-glycosylated. The secreted form is produced through cleavage at Lys-103 by intracellular processing. In terms of tissue distribution, expressed in plasma cells and also in a number of non-lymphoid tissues, including the distal convoluted tubule of the kidney, chondrocytes and epididymis. Expressed in melanocytes but not in keratinocytes.

The protein localises to the cell membrane. It is found in the basolateral cell membrane. It localises to the secreted. The catalysed reaction is Hydrolytically removes 5'-nucleotides successively from the 3'-hydroxy termini of 3'-hydroxy-terminated oligonucleotides.. The enzyme catalyses a ribonucleoside 5'-triphosphate + H2O = a ribonucleoside 5'-phosphate + diphosphate + H(+). It carries out the reaction ATP + H2O = AMP + diphosphate + H(+). It catalyses the reaction UTP + H2O = UMP + diphosphate + H(+). The catalysed reaction is GTP + H2O = GMP + diphosphate + H(+). The enzyme catalyses CTP + H2O = CMP + diphosphate + H(+). It carries out the reaction 2',3'-cGAMP + 2 H2O = GMP + AMP + 2 H(+). It catalyses the reaction P(1),P(4)-bis(5'-adenosyl) tetraphosphate + H2O = AMP + ATP + 2 H(+). The catalysed reaction is 3',5'-cyclic AMP + H2O = AMP + H(+). With respect to regulation, at low concentrations of ATP, a phosphorylated intermediate is formed which inhibits further hydrolysis. In terms of biological role, nucleotide pyrophosphatase that generates diphosphate (PPi) and functions in bone mineralization and soft tissue calcification by regulating pyrophosphate levels. PPi inhibits bone mineralization and soft tissue calcification by binding to nascent hydroxyapatite crystals, thereby preventing further growth of these crystals. Preferentially hydrolyzes ATP, but can also hydrolyze other nucleoside 5' triphosphates such as GTP, CTP and UTP to their corresponding monophosphates with release of pyrophosphate, as well as diadenosine polyphosphates, and also 3',5'-cAMP to AMP. May also be involved in the regulation of the availability of nucleotide sugars in the endoplasmic reticulum and Golgi, and the regulation of purinergic signaling. Inhibits ectopic joint calcification and maintains articular chondrocytes by repressing hedgehog signaling; it is however unclear whether hedgehog inhibition is direct or indirect. Appears to modulate insulin sensitivity and function. Also involved in melanogenesis. Also able to hydrolyze 2',3'-cGAMP (cyclic GMP-AMP), a second messenger that activates TMEM173/STING and triggers type-I interferon production. 2',3'-cGAMP degradation takes place in the lumen or extracellular space, and not in the cytosol where it is produced; the role of 2',3'-cGAMP hydrolysis is therefore unclear. Not able to hydrolyze the 2',3'-cGAMP linkage isomer 3'-3'-cGAMP. This Homo sapiens (Human) protein is Ectonucleotide pyrophosphatase/phosphodiesterase family member 1.